Consider the following 184-residue polypeptide: Photosystem I assembly protein Ycf3 (184 aa).

TPR repeat units follow at residues 31–64, 68–101, and 131–164; these read AFAYYKAGMAAQAEGDYAEALENYYESLYLDEDQ, SYTLYNIGLIYAKNENYPRALEYYHQAVSLNSNL, and MEISEEYEYIELAKGLFDKAAEYWYQALKLAPDN.

It belongs to the Ycf3 family.

It localises to the plastid. Its subcellular location is the chloroplast thylakoid membrane. Its function is as follows. Essential for the assembly of the photosystem I (PSI) complex. May act as a chaperone-like factor to guide the assembly of the PSI subunits. The protein is Photosystem I assembly protein Ycf3 of Thalassiosira pseudonana (Marine diatom).